A 317-amino-acid polypeptide reads, in one-letter code: Melanocyte-stimulating hormone receptor (317 aa).

Residues 1–37 (MPVQGSLRSLVGAVNSTPTASPHLRPATNQTEPQCLE) are Extracellular-facing. Asn29 carries an N-linked (GlcNAc...) asparagine glycan. The chain crosses the membrane as a helical span at residues 38-63 (VSVPVGLFLCLGLVSLVENTLVVAVI). Topologically, residues 64 to 72 (AKNRNLHSP) are cytoplasmic. A helical membrane pass occupies residues 73 to 93 (MYCFICCLALSDLLVSVSNVL). Topologically, residues 94 to 118 (KTAVLLLLEAGALAAQATVVQQLGN) are extracellular. The chain crosses the membrane as a helical span at residues 119-140 (VINMLICSSMVSSLCFLGAIAM). The Cytoplasmic segment spans residues 141-163 (DRYISIFYALRYHSIVTLARARR). A helical membrane pass occupies residues 164–183 (AIAAVWVASILSSILFFTYY). The Extracellular portion of the chain corresponds to 184-191 (DRTAALLC). A helical membrane pass occupies residues 192 to 211 (LVVFFLAMLVLMAVLYVHML). Topologically, residues 212 to 240 (TQACQHAQGIARLHKRQHPVQQGWGLKGA) are cytoplasmic. A helical membrane pass occupies residues 241-266 (ATLAVLLGVFFLCWGPLFLHLTLIAV). At 267–279 (CPQHPTCNCIVKN) the chain is on the extracellular side. A helical membrane pass occupies residues 280-300 (FKLFLALIICNAIVDPLIYAF). The Cytoplasmic segment spans residues 301-317 (RSQELRKTLKEVLLFSW).

Belongs to the G-protein coupled receptor 1 family. In terms of assembly, interacts with MGRN1, but does not undergo MGRN1-mediated ubiquitination; this interaction competes with GNAS-binding and thus inhibits agonist-induced cAMP production. Interacts with OPN3; the interaction results in a decrease in MC1R-mediated cAMP signaling and ultimately a decrease in melanin production in melanocytes.

It is found in the cell membrane. Receptor for MSH (alpha, beta and gamma) and ACTH. The activity of this receptor is mediated by G proteins which activate adenylate cyclase. Mediates melanogenesis, the production of eumelanin (black/brown) and phaeomelanin (red/yellow), via regulation of cAMP signaling in melanocytes. The polypeptide is Melanocyte-stimulating hormone receptor (MC1R) (Varecia rubra (Red ruffed lemur)).